Here is a 249-residue protein sequence, read N- to C-terminus: Octanoyltransferase (249 aa).

The segment at 1–23 is disordered; the sequence is MVNSPQNPRQDQRQDLDLTSFSA. One can recognise a BPL/LPL catalytic domain in the interval 57–241; sequence GEAPELVWLL…AFEELFGPTR (185 aa). Substrate is bound by residues 95–102, 170–172, and 183–185; these read RGGQLTYH, AIG, and GIA. Residue Cys-201 is the Acyl-thioester intermediate of the active site.

Belongs to the LipB family.

Its subcellular location is the cytoplasm. It carries out the reaction octanoyl-[ACP] + L-lysyl-[protein] = N(6)-octanoyl-L-lysyl-[protein] + holo-[ACP] + H(+). It participates in protein modification; protein lipoylation via endogenous pathway; protein N(6)-(lipoyl)lysine from octanoyl-[acyl-carrier-protein]: step 1/2. Functionally, catalyzes the transfer of endogenously produced octanoic acid from octanoyl-acyl-carrier-protein onto the lipoyl domains of lipoate-dependent enzymes. Lipoyl-ACP can also act as a substrate although octanoyl-ACP is likely to be the physiological substrate. This is Octanoyltransferase from Bradyrhizobium diazoefficiens (strain JCM 10833 / BCRC 13528 / IAM 13628 / NBRC 14792 / USDA 110).